Reading from the N-terminus, the 253-residue chain is Triosephosphate isomerase (253 aa).

9–11 (NWK) contributes to the substrate binding site. The Electrophile role is filled by H95. The active-site Proton acceptor is the E167. Residues G173, S213, and 234–235 (GG) contribute to the substrate site. S213 carries the post-translational modification Phosphoserine.

Belongs to the triosephosphate isomerase family. Homodimer.

It is found in the cytoplasm. The enzyme catalyses D-glyceraldehyde 3-phosphate = dihydroxyacetone phosphate. It participates in carbohydrate biosynthesis; gluconeogenesis. Its pathway is carbohydrate degradation; glycolysis; D-glyceraldehyde 3-phosphate from glycerone phosphate: step 1/1. Involved in the gluconeogenesis. Catalyzes stereospecifically the conversion of dihydroxyacetone phosphate (DHAP) to D-glyceraldehyde-3-phosphate (G3P). The chain is Triosephosphate isomerase from Geobacillus thermodenitrificans (strain NG80-2).